Consider the following 85-residue polypeptide: Large ribosomal subunit protein eL43 (85 aa).

Residues 38–59 (CPVCGRKAVRRISTGIWQCQKC) form a C4-type zinc finger.

This sequence belongs to the eukaryotic ribosomal protein eL43 family. Requires Zn(2+) as cofactor.

This Thermococcus sibiricus (strain DSM 12597 / MM 739) protein is Large ribosomal subunit protein eL43.